Here is a 129-residue protein sequence, read N- to C-terminus: UPF0102 protein amb4503 (129 aa).

Belongs to the UPF0102 family.

The protein is UPF0102 protein amb4503 of Paramagnetospirillum magneticum (strain ATCC 700264 / AMB-1) (Magnetospirillum magneticum).